A 452-amino-acid polypeptide reads, in one-letter code: 23S rRNA (uracil(1939)-C(5))-methyltransferase RlmD (452 aa).

Residues 1 to 23 (MSRKKSNGGLRFQPAGGNRATQI) are disordered. The 59-residue stretch at 22–80 (QIPVGKKQRLLIERVAGDGRGIAFIEGRTWFVSGALGGEEVEARVLGARGKVVEARLER) folds into the TRAM domain. [4Fe-4S] cluster contacts are provided by Cys93, Cys99, Cys102, and Cys181. Gln285, Phe314, Asn319, Glu335, Asp362, and Asp383 together coordinate S-adenosyl-L-methionine. Cys409 serves as the catalytic Nucleophile.

The protein belongs to the class I-like SAM-binding methyltransferase superfamily. RNA M5U methyltransferase family. RlmD subfamily.

The enzyme catalyses uridine(1939) in 23S rRNA + S-adenosyl-L-methionine = 5-methyluridine(1939) in 23S rRNA + S-adenosyl-L-homocysteine + H(+). In terms of biological role, catalyzes the formation of 5-methyl-uridine at position 1939 (m5U1939) in 23S rRNA. The chain is 23S rRNA (uracil(1939)-C(5))-methyltransferase RlmD from Pseudomonas entomophila (strain L48).